The following is a 156-amino-acid chain: Cell division protein SepF (156 aa).

Positions 20–36 (AQYGYEKEQTDMKKQQD) are enriched in basic and acidic residues. The disordered stretch occupies residues 20 to 50 (AQYGYEKEQTDMKKQQDPPEQQDVTFPKAQP).

Belongs to the SepF family. Homodimer. Interacts with FtsZ.

The protein localises to the cytoplasm. Its function is as follows. Cell division protein that is part of the divisome complex and is recruited early to the Z-ring. Probably stimulates Z-ring formation, perhaps through the cross-linking of FtsZ protofilaments. Its function overlaps with FtsA. This chain is Cell division protein SepF, found in Bacillus cereus (strain G9842).